Reading from the N-terminus, the 65-residue chain is Large ribosomal subunit protein bL35 (65 aa).

The protein belongs to the bacterial ribosomal protein bL35 family.

This is Large ribosomal subunit protein bL35 from Ruminiclostridium cellulolyticum (strain ATCC 35319 / DSM 5812 / JCM 6584 / H10) (Clostridium cellulolyticum).